Here is a 394-residue protein sequence, read N- to C-terminus: S-adenosylmethionine synthase 3 (394 aa).

Glu11 contributes to the Mg(2+) binding site. His17 contributes to the ATP binding site. K(+) is bound at residue Glu45. Glu58 and Gln101 together coordinate L-methionine. ATP is bound by residues 169–171 (DGK), 237–240 (SGRF), Asp248, 254–255 (RK), Ala271, Lys275, and Lys279. Position 248 (Asp248) interacts with L-methionine. Lys279 is an L-methionine binding site.

This sequence belongs to the AdoMet synthase family. In terms of assembly, homotetramer. Requires Mn(2+) as cofactor. It depends on Mg(2+) as a cofactor. Co(2+) serves as cofactor. K(+) is required as a cofactor.

The protein resides in the cytoplasm. It catalyses the reaction L-methionine + ATP + H2O = S-adenosyl-L-methionine + phosphate + diphosphate. It participates in amino-acid biosynthesis; S-adenosyl-L-methionine biosynthesis; S-adenosyl-L-methionine from L-methionine: step 1/1. Its function is as follows. Catalyzes the formation of S-adenosylmethionine from methionine and ATP. The reaction comprises two steps that are both catalyzed by the same enzyme: formation of S-adenosylmethionine (AdoMet) and triphosphate, and subsequent hydrolysis of the triphosphate. This chain is S-adenosylmethionine synthase 3 (SAM3), found in Hordeum vulgare (Barley).